Consider the following 519-residue polypeptide: Na(+)/H(+) exchange regulatory cofactor NHE-RF3 (519 aa).

Residues E9–D90 enclose the PDZ 1 domain. 6 positions are modified to phosphoserine: S108, S148, S192, S250, S334, and S348. PDZ domains follow at residues E128 to E215 and V243 to E323. Residues S348 to H374 are disordered. Residues L378–M458 form the PDZ 4 domain. Residues T451 and T488 each carry the phosphothreonine modification. The disordered stretch occupies residues V479 to M519. The segment covering P482–T503 has biased composition (basic and acidic residues). 2 positions are modified to phosphoserine: S489 and S492. T503 carries the post-translational modification Phosphothreonine. The span at S505–M519 shows a compositional bias: low complexity. S508, S510, S511, S512, and S514 each carry phosphoserine.

This sequence belongs to the NHER family. Interacts with PDZK1IP1 and ABCC2. Binds to the C-terminal region of SLC26A3. Interacts (via C-terminal PDZ domain) with SLC26A6 (via C-terminal domain). Interacts (via C-terminal PDZ domain) with SLC9A3 (via C-terminal domain). Component of a complex, composed of PDZK1, SYNGAP1, KLHL17 and NMDA receptors. Interacts (via PDZ1 domain) directly with KLHL17; the interaction is important for integrity of actin cytoskeleton structures in neurons. Forms a heterodimeric complex with NHERF1. Interacts with AKAP2, BCR, CFTR, SLCO1A1, SLC22A12, SLC22A4, SLC22A5, SLC26A6, NHERF2 and SLC17A1. Interacts (via the first PDZ domain) with PTGIR (via non-isoprenylated C-terminus). Interacts (via PDZ domains 1 and 3) with SCARB1 (C-terminal domain). Interacts (via PDZ domains 1 and 3) with SLC5A8 (via PDZ-binding motif); interaction increases nicotinate transport activity of SLC5A8. In terms of tissue distribution, expressed in kidney, liver, small intestine. brain, lung, and testis (at protein level).

It localises to the membrane. The protein resides in the cell membrane. Its function is as follows. A scaffold protein that connects plasma membrane proteins and regulatory components, regulating their surface expression in epithelial cells apical domains. May be involved in the coordination of a diverse range of regulatory processes for ion transport and second messenger cascades. In complex with NHERF1, may cluster proteins that are functionally dependent in a mutual fashion and modulate the trafficking and the activity of the associated membrane proteins. May play a role in the cellular mechanisms associated with multidrug resistance through its interaction with ABCC2 and PDZK1IP1. May potentiate the CFTR chloride channel activity. Required for normal cell-surface expression of SCARB1. Plays a role in maintaining normal plasma cholesterol levels via its effects on SCARB1. Plays a role in the normal localization and function of the chloride-anion exchanger SLC26A6 to the plasma membrane in the brush border of the proximal tubule of the kidney. May be involved in the regulation of proximal tubular Na(+)-dependent inorganic phosphate cotransport therefore playing an important role in tubule function. This chain is Na(+)/H(+) exchange regulatory cofactor NHE-RF3 (Pdzk1), found in Mus musculus (Mouse).